We begin with the raw amino-acid sequence, 252 residues long: 2-succinyl-6-hydroxy-2,4-cyclohexadiene-1-carboxylate synthase (252 aa).

This sequence belongs to the AB hydrolase superfamily. MenH family. As to quaternary structure, monomer.

The enzyme catalyses 5-enolpyruvoyl-6-hydroxy-2-succinyl-cyclohex-3-ene-1-carboxylate = (1R,6R)-6-hydroxy-2-succinyl-cyclohexa-2,4-diene-1-carboxylate + pyruvate. The protein operates within quinol/quinone metabolism; 1,4-dihydroxy-2-naphthoate biosynthesis; 1,4-dihydroxy-2-naphthoate from chorismate: step 3/7. It functions in the pathway quinol/quinone metabolism; menaquinone biosynthesis. Its function is as follows. Catalyzes a proton abstraction reaction that results in 2,5-elimination of pyruvate from 2-succinyl-5-enolpyruvyl-6-hydroxy-3-cyclohexene-1-carboxylate (SEPHCHC) and the formation of 2-succinyl-6-hydroxy-2,4-cyclohexadiene-1-carboxylate (SHCHC). The protein is 2-succinyl-6-hydroxy-2,4-cyclohexadiene-1-carboxylate synthase of Escherichia coli O81 (strain ED1a).